The chain runs to 211 residues: ATP phosphoribosyltransferase (211 aa).

Belongs to the ATP phosphoribosyltransferase family. Short subfamily. As to quaternary structure, heteromultimer composed of HisG and HisZ subunits.

It is found in the cytoplasm. The catalysed reaction is 1-(5-phospho-beta-D-ribosyl)-ATP + diphosphate = 5-phospho-alpha-D-ribose 1-diphosphate + ATP. It participates in amino-acid biosynthesis; L-histidine biosynthesis; L-histidine from 5-phospho-alpha-D-ribose 1-diphosphate: step 1/9. In terms of biological role, catalyzes the condensation of ATP and 5-phosphoribose 1-diphosphate to form N'-(5'-phosphoribosyl)-ATP (PR-ATP). Has a crucial role in the pathway because the rate of histidine biosynthesis seems to be controlled primarily by regulation of HisG enzymatic activity. The sequence is that of ATP phosphoribosyltransferase from Bacillus cereus (strain AH187).